The sequence spans 440 residues: Xylose isomerase (440 aa).

Active-site residues include His101 and Asp104. Mg(2+)-binding residues include Glu232, Glu268, His271, Asp296, Asp307, Asp309, and Asp339.

Belongs to the xylose isomerase family. Homotetramer. It depends on Mg(2+) as a cofactor.

Its subcellular location is the cytoplasm. It carries out the reaction alpha-D-xylose = alpha-D-xylulofuranose. The chain is Xylose isomerase from Salmonella agona (strain SL483).